The sequence spans 466 residues: SVGFKAGVKEYKLTYYTPDYETQDTDILAAFRVTPQPGVPPEEAGAAVAAESSTGTWTTVWTDGLTSLDRYKGRCYHIEPVAGEDNQYIVYVAYPLDLFEEGSVTNMFTSIVGNVFGFKALRALRLEDLRVPPAYSKTFQGPPHGIQVERDKLNKYGRPLLGCTIKPKLGLSAKNYGRAVYECLRGGLDFTKDDENVNSQPFMRWRDRFLFCAEAIYKAQAETGEIKGHYLNATAGTCEEMTKRADFAYELGVPIIMHDYLTGGFTANTSLALYCRNHGLLLHIHRAMHAVIDRQKNHGIHFRVLAKALRLSGGDHIHAGTVVGKLEGERDITLGFVVLLRDDYLEKDRSRGIYFTQFWVSLPGVLPVASGGIHVWHMPALTEIFGDDSVLQFGGGTLGHPWGNAPGAVANRVALEACVQARNEGRDLAREGNEIIRKASKWSPELSAACEVWKEIKLYFEAVDTL.

Lys-5 carries the post-translational modification N6,N6,N6-trimethyllysine. The substrate site is built by Asn-114 and Thr-164. Catalysis depends on Lys-166, which acts as the Proton acceptor. Lys-168 serves as a coordination point for substrate. Mg(2+)-binding residues include Lys-192, Asp-194, and Glu-195. The residue at position 192 (Lys-192) is an N6-carboxylysine. His-285 serves as the catalytic Proton acceptor. 3 residues coordinate substrate: Arg-286, His-318, and Ser-370.

This sequence belongs to the RuBisCO large chain family. Type I subfamily. Heterohexadecamer of 8 large chains and 8 small chains; disulfide-linked. The disulfide link is formed within the large subunit homodimers. The cofactor is Mg(2+). In terms of processing, the disulfide bond which can form in the large chain dimeric partners within the hexadecamer appears to be associated with oxidative stress and protein turnover.

It is found in the plastid. The protein localises to the chloroplast. The catalysed reaction is 2 (2R)-3-phosphoglycerate + 2 H(+) = D-ribulose 1,5-bisphosphate + CO2 + H2O. It carries out the reaction D-ribulose 1,5-bisphosphate + O2 = 2-phosphoglycolate + (2R)-3-phosphoglycerate + 2 H(+). Functionally, ruBisCO catalyzes two reactions: the carboxylation of D-ribulose 1,5-bisphosphate, the primary event in carbon dioxide fixation, as well as the oxidative fragmentation of the pentose substrate in the photorespiration process. Both reactions occur simultaneously and in competition at the same active site. In Drosera binata (Fork-leaved sundew), this protein is Ribulose bisphosphate carboxylase large chain.